Reading from the N-terminus, the 905-residue chain is Alanine--tRNA ligase (905 aa).

Residues His-569, His-573, Cys-693, and His-697 each coordinate Zn(2+).

This sequence belongs to the class-II aminoacyl-tRNA synthetase family. It depends on Zn(2+) as a cofactor.

The protein resides in the cytoplasm. The catalysed reaction is tRNA(Ala) + L-alanine + ATP = L-alanyl-tRNA(Ala) + AMP + diphosphate. Its function is as follows. Catalyzes the attachment of alanine to tRNA(Ala) in a two-step reaction: alanine is first activated by ATP to form Ala-AMP and then transferred to the acceptor end of tRNA(Ala). Also edits incorrectly charged Ser-tRNA(Ala) and Gly-tRNA(Ala) via its editing domain. In Roseiflexus sp. (strain RS-1), this protein is Alanine--tRNA ligase.